The following is a 443-amino-acid chain: Ribosomal protein uS12 methylthiotransferase RimO (443 aa).

The MTTase N-terminal domain occupies 5–115 (PNIGFISLGC…VMKHVHKYVP (111 aa)). [4Fe-4S] cluster-binding residues include Cys14, Cys50, Cys79, Cys147, Cys151, and Cys154. The 242-residue stretch at 133–374 (LTPKHYAYLK…MQVQQRISAA (242 aa)) folds into the Radical SAM core domain. A TRAM domain is found at 377 to 443 (QQKVGKTLAV…ADEYDLWGTC (67 aa)).

It belongs to the methylthiotransferase family. RimO subfamily. The cofactor is [4Fe-4S] cluster.

The protein resides in the cytoplasm. It carries out the reaction L-aspartate(89)-[ribosomal protein uS12]-hydrogen + (sulfur carrier)-SH + AH2 + 2 S-adenosyl-L-methionine = 3-methylsulfanyl-L-aspartate(89)-[ribosomal protein uS12]-hydrogen + (sulfur carrier)-H + 5'-deoxyadenosine + L-methionine + A + S-adenosyl-L-homocysteine + 2 H(+). In terms of biological role, catalyzes the methylthiolation of an aspartic acid residue of ribosomal protein uS12. In Actinobacillus pleuropneumoniae serotype 5b (strain L20), this protein is Ribosomal protein uS12 methylthiotransferase RimO.